A 902-amino-acid chain; its full sequence is Protein translocase subunit SecA (902 aa).

ATP contacts are provided by residues glutamine 87, 105–109, and aspartate 512; that span reads GEGKT. Residues 850–902 are disordered; that stretch reads RLAKQQQLSHEVTKESQMSAVDGQVASGKKVGRNEPCPCGSGKKYKHCHGKLG. Polar residues predominate over residues 853–868; that stretch reads KQQQLSHEVTKESQMS. Residues cysteine 886, cysteine 888, cysteine 897, and histidine 898 each contribute to the Zn(2+) site. The segment covering 892-902 has biased composition (basic residues); sequence KKYKHCHGKLG.

This sequence belongs to the SecA family. In terms of assembly, monomer and homodimer. Part of the essential Sec protein translocation apparatus which comprises SecA, SecYEG and auxiliary proteins SecDF-YajC and YidC. It depends on Zn(2+) as a cofactor.

Its subcellular location is the cell inner membrane. It localises to the cytoplasm. The catalysed reaction is ATP + H2O + cellular proteinSide 1 = ADP + phosphate + cellular proteinSide 2.. Part of the Sec protein translocase complex. Interacts with the SecYEG preprotein conducting channel. Has a central role in coupling the hydrolysis of ATP to the transfer of proteins into and across the cell membrane, serving both as a receptor for the preprotein-SecB complex and as an ATP-driven molecular motor driving the stepwise translocation of polypeptide chains across the membrane. This is Protein translocase subunit SecA from Proteus mirabilis (strain HI4320).